Reading from the N-terminus, the 204-residue chain is MKFNATARSVQGSSASRRLRRAGRVPAIVYGGTAAPLNIELDHNEIYHALRKEEFHASILNMVIEGGKTEEVLLRSVQWHAYKPQVMHVDFQRVDANQALHTKVPLHFINAEVSPAVKLSGAIISHVLTELDITCLPALLPQFIEVNLGDLLGGGSIHLADIKLPKGVTFNAHGGDTNPLIAAAVVKGGGAADEGDAAAEQPAA.

Belongs to the bacterial ribosomal protein bL25 family. CTC subfamily. Part of the 50S ribosomal subunit; part of the 5S rRNA/L5/L18/L25 subcomplex. Contacts the 5S rRNA. Binds to the 5S rRNA independently of L5 and L18.

In terms of biological role, this is one of the proteins that binds to the 5S RNA in the ribosome where it forms part of the central protuberance. The protein is Large ribosomal subunit protein bL25 of Bordetella bronchiseptica (strain ATCC BAA-588 / NCTC 13252 / RB50) (Alcaligenes bronchisepticus).